Reading from the N-terminus, the 33-residue chain is Cytochrome b6-f complex subunit 8 (33 aa).

Residues 2–22 (LFTIAWASLAAVFSFSIAMVV) form a helical membrane-spanning segment.

The protein belongs to the PetN family. As to quaternary structure, the 4 large subunits of the cytochrome b6-f complex are cytochrome b6, subunit IV (17 kDa polypeptide, PetD), cytochrome f and the Rieske protein, while the 4 small subunits are PetG, PetL, PetM and PetN. The complex functions as a dimer.

Its subcellular location is the cellular thylakoid membrane. Functionally, component of the cytochrome b6-f complex, which mediates electron transfer between photosystem II (PSII) and photosystem I (PSI), cyclic electron flow around PSI, and state transitions. In Synechococcus sp. (strain CC9311), this protein is Cytochrome b6-f complex subunit 8.